We begin with the raw amino-acid sequence, 515 residues long: Vesicular acetylcholine transporter (515 aa).

At 1 to 40 the chain is on the cytoplasmic side; it reads MGVTMAVGLAKAAMGKISSAIGERSKRISGAMNEPRRKRK. Residues 41 to 61 form a helical membrane-spanning segment; the sequence is ILLVIVCIAMLLDNMLYMVIV. The Lumenal, vesicle segment spans residues 62 to 112; the sequence is PIIPNYLETIRTYKLVYITTPSNGTNGSLLNSTQRAVLERNPNANEDIQIG. N-linked (GlcNAc...) asparagine glycosylation is found at Asn-84, Asn-87, and Asn-92. The chain crosses the membrane as a helical span at residues 113-133; that stretch reads VLFASKAILQLLSNPFTGTFI. Residues 134–139 are Cytoplasmic-facing; it reads DRVGYD. A helical membrane pass occupies residues 140–160; that stretch reads IPLLIGLTIMFFSTITFAFGE. Topologically, residues 161 to 169 are lumenal, vesicle; sequence SYAVLFAAR. Residues 170 to 190 traverse the membrane as a helical segment; that stretch reads SLQGLGSAFADTSGIAMIADK. Residues 191-201 lie on the Cytoplasmic side of the membrane; sequence YTEESERTQAL. The chain crosses the membrane as a helical span at residues 202-222; the sequence is GIALAFISFGSLVAPPFGGVL. The Lumenal, vesicle segment spans residues 223 to 229; that stretch reads YQFAGKW. A helical transmembrane segment spans residues 230 to 250; that stretch reads VPFLVLSFVCLLDGILLLMVV. The Cytoplasmic segment spans residues 251–271; that stretch reads TPFASRTRENMLQGTPIYKLM. A helical transmembrane segment spans residues 272–292; sequence IDPYIAVVAGALTTCNIPLAF. Residues 293–310 are Lumenal, vesicle-facing; it reads LEPTISNWMKKTMNASEW. A glycan (N-linked (GlcNAc...) asparagine) is linked at Asn-306. Residues 311–331 traverse the membrane as a helical segment; that stretch reads QMGITWLPAFFPHILGVYITV. The Cytoplasmic portion of the chain corresponds to 332–341; that stretch reads KLAAKYPNYQ. A helical membrane pass occupies residues 342-362; that stretch reads WFYGAVGLVIIGASSCTIPAC. The Lumenal, vesicle portion of the chain corresponds to 363–367; that stretch reads RNFEE. A helical membrane pass occupies residues 368 to 388; it reads LIIPLCALCFGIALVDTALLP. Topologically, residues 389-404 are cytoplasmic; it reads TLAFLVDIRYVSVYGS. The chain crosses the membrane as a helical span at residues 405-425; that stretch reads VYAIADISYSVAYALGPIMAG. The Lumenal, vesicle portion of the chain corresponds to 426–432; sequence QIVHDLG. A helical membrane pass occupies residues 433–453; that stretch reads FVQLNLGMGLVNILYAPALLF. Over 454-515 the chain is Cytoplasmic; the sequence is LRNVCQMKPS…VLSDQEGYSE (62 aa). The interval 489 to 515 is disordered; the sequence is AAKEPHGSSSGNHSVHAVLSDQEGYSE.

Belongs to the major facilitator superfamily. Vesicular transporter family. In terms of tissue distribution, electric lobe.

The protein resides in the membrane. Functionally, involved in acetylcholine transport into synaptic vesicles. The protein is Vesicular acetylcholine transporter of Tetronarce californica (Pacific electric ray).